We begin with the raw amino-acid sequence, 404 residues long: Cysteine desulfurase IscS (404 aa).

Pyridoxal 5'-phosphate-binding positions include 75-76, asparagine 155, glutamine 183, and 203-205; these read AT and SGH. The residue at position 206 (lysine 206) is an N6-(pyridoxal phosphate)lysine. Residue threonine 243 coordinates pyridoxal 5'-phosphate. Cysteine 328 acts as the Cysteine persulfide intermediate in catalysis. Residue cysteine 328 participates in [2Fe-2S] cluster binding.

This sequence belongs to the class-V pyridoxal-phosphate-dependent aminotransferase family. NifS/IscS subfamily. In terms of assembly, homodimer. Forms a heterotetramer with IscU, interacts with other sulfur acceptors. Requires pyridoxal 5'-phosphate as cofactor.

The protein localises to the cytoplasm. The enzyme catalyses (sulfur carrier)-H + L-cysteine = (sulfur carrier)-SH + L-alanine. It functions in the pathway cofactor biosynthesis; iron-sulfur cluster biosynthesis. Master enzyme that delivers sulfur to a number of partners involved in Fe-S cluster assembly, tRNA modification or cofactor biosynthesis. Catalyzes the removal of elemental sulfur and selenium atoms from cysteine and selenocysteine to produce alanine. Functions as a sulfur delivery protein for Fe-S cluster synthesis onto IscU, an Fe-S scaffold assembly protein, as well as other S acceptor proteins. Also functions as a selenium delivery protein in the pathway for the biosynthesis of selenophosphate. The protein is Cysteine desulfurase IscS of Salmonella paratyphi C (strain RKS4594).